The following is a 711-amino-acid chain: Ribosomal RNA large subunit methyltransferase K/L (711 aa).

The THUMP domain maps to 43–154; the sequence is LGYRITLWSR…RGEITIGINF (112 aa).

Belongs to the methyltransferase superfamily. RlmKL family.

The protein localises to the cytoplasm. The enzyme catalyses guanosine(2445) in 23S rRNA + S-adenosyl-L-methionine = N(2)-methylguanosine(2445) in 23S rRNA + S-adenosyl-L-homocysteine + H(+). It catalyses the reaction guanosine(2069) in 23S rRNA + S-adenosyl-L-methionine = N(2)-methylguanosine(2069) in 23S rRNA + S-adenosyl-L-homocysteine + H(+). Functionally, specifically methylates the guanine in position 2445 (m2G2445) and the guanine in position 2069 (m7G2069) of 23S rRNA. This is Ribosomal RNA large subunit methyltransferase K/L from Shewanella pealeana (strain ATCC 700345 / ANG-SQ1).